We begin with the raw amino-acid sequence, 234 residues long: Urease accessory protein UreG 1 (234 aa).

A disordered region spans residues 1 to 29 (MTRTPTGVPMHLGHTHDAPAAVSADATRP). 42 to 49 (GPVGSGKT) lines the GTP pocket.

It belongs to the SIMIBI class G3E GTPase family. UreG subfamily. In terms of assembly, homodimer. UreD, UreF and UreG form a complex that acts as a GTP-hydrolysis-dependent molecular chaperone, activating the urease apoprotein by helping to assemble the nickel containing metallocenter of UreC. The UreE protein probably delivers the nickel.

It is found in the cytoplasm. Facilitates the functional incorporation of the urease nickel metallocenter. This process requires GTP hydrolysis, probably effectuated by UreG. This chain is Urease accessory protein UreG 1, found in Streptomyces griseus subsp. griseus (strain JCM 4626 / CBS 651.72 / NBRC 13350 / KCC S-0626 / ISP 5235).